Here is a 343-residue protein sequence, read N- to C-terminus: UDP-3-O-acylglucosamine N-acyltransferase 2 (343 aa).

H251 functions as the Proton acceptor in the catalytic mechanism.

This sequence belongs to the transferase hexapeptide repeat family. LpxD subfamily. In terms of assembly, homotrimer.

The enzyme catalyses a UDP-3-O-[(3R)-3-hydroxyacyl]-alpha-D-glucosamine + a (3R)-hydroxyacyl-[ACP] = a UDP-2-N,3-O-bis[(3R)-3-hydroxyacyl]-alpha-D-glucosamine + holo-[ACP] + H(+). It participates in bacterial outer membrane biogenesis; LPS lipid A biosynthesis. Catalyzes the N-acylation of UDP-3-O-acylglucosamine using 3-hydroxyacyl-ACP as the acyl donor. Is involved in the biosynthesis of lipid A, a phosphorylated glycolipid that anchors the lipopolysaccharide to the outer membrane of the cell. The sequence is that of UDP-3-O-acylglucosamine N-acyltransferase 2 from Legionella pneumophila subsp. pneumophila (strain Philadelphia 1 / ATCC 33152 / DSM 7513).